The following is a 205-amino-acid chain: Small ribosomal subunit protein uS4 (205 aa).

The interval 1–46 (MSKRHSAKYKIDRRMGENLWGRPKSPVNQRSYGPGQHGQRRKQKVS) is disordered. Residues 94-154 (SRLDAIVYRA…EKSRNMALVL (61 aa)) enclose the S4 RNA-binding domain.

This sequence belongs to the universal ribosomal protein uS4 family. In terms of assembly, part of the 30S ribosomal subunit. Contacts protein S5. The interaction surface between S4 and S5 is involved in control of translational fidelity.

In terms of biological role, one of the primary rRNA binding proteins, it binds directly to 16S rRNA where it nucleates assembly of the body of the 30S subunit. Its function is as follows. With S5 and S12 plays an important role in translational accuracy. This Caulobacter sp. (strain K31) protein is Small ribosomal subunit protein uS4.